We begin with the raw amino-acid sequence, 47 residues long: Delta-actitoxin-Ael1a (47 aa).

3 disulfides stabilise this stretch: cysteine 4/cysteine 44, cysteine 6/cysteine 34, and cysteine 27/cysteine 45.

It belongs to the sea anemone sodium channel inhibitory toxin family. Type I subfamily. Expressed in ectodermal glands. Not expressed in nematocytes.

The protein localises to the secreted. Binds specifically to voltage-gated sodium channels (Nav), thereby delaying their inactivation during signal transduction. It strongly stimulates mammalian cardiac muscle contraction. Paralyzes the shore crab (C.maenas) by tetanic contractions after intramuscular injection. This is Delta-actitoxin-Ael1a from Anthopleura elegantissima (Green aggregating anemone).